A 1160-amino-acid polypeptide reads, in one-letter code: Nonribosomal peptide synthetase fmqC (1160 aa).

The segment at 132–520 (TYRELNDRSS…LGEVEHALQQ (389 aa)) is adenylation. The Carrier domain maps to 642–719 (QPVTQLEESL…EMAGMLDGVT (78 aa)). The residue at position 679 (Ser-679) is an O-(pantetheine 4'-phosphoryl)serine. The interval 749–1025 (CTLEDLQEGF…CAAAETPMRI (277 aa)) is condensation.

Belongs to the NRP synthetase family. In terms of assembly, interacts with the mitogen-activated protein kinase mpkA. Post-translationally, phosphorylated by mpkA during conidiogenesis.

It is found in the cytoplasm. It functions in the pathway alkaloid biosynthesis. Nonribosomal peptide synthetase; part of the gene cluster that mediates the biosynthesis of the antitumor fumiquinazolines that confer a dual-usage capability to defend against phagocytes in the environment and animal hosts. The simplest member is fumiquinazoline F (FQF) with a 6-6-6 tricyclic core derived from anthranilic acid (Ant), tryptophan (Trp), and alanine (Ala). The trimodular NRPS fmqA is responsible for FQF formation. Modules 1, 2 and 3 of fmqA are predicted to activate and load Ant, Trp and Ala, respectively, providing for the assembly of an Ant-Trp-Ala-S-enzyme intermediate that would undergo double cyclization for chain release and generation of the tricyclic 6-6-6 product fumiquinazoline F. The presence of an E domain predicted for module 2 of fmqA is consistent with epimerization of L-Trp to D-Trp during assembly to generate the R-stereocenter at C14 of FQF. The FAD-dependent monooxygenase fmqB and the monomodular NRPS fmqC then maturate FQF to FQA. FmqB oxidizes the 2',3'-double bond of the indole side chain of FQF, and fmqC activates L-Ala as the adenylate, installs it as the pantetheinyl thioester on its carrier protein domain, and acylates the oxidized indole for subsequent intramolecular cyclization to create the 6-5-5-imidazolindolone of FQA. The FAD-linked oxidoreductase fmqD introduces a third layer of scaffold complexity by converting FQA to the spirohemiaminal FQC, presumably by catalyzing the formation of a transient imine within the pyrazinone ring. FQC subsequently converts nonenzymatically to the known cyclic aminal FQD. This is Nonribosomal peptide synthetase fmqC from Aspergillus fumigatus (strain ATCC MYA-4609 / CBS 101355 / FGSC A1100 / Af293) (Neosartorya fumigata).